The primary structure comprises 310 residues: N-acetyl-gamma-glutamyl-phosphate reductase (310 aa).

Cysteine 117 is a catalytic residue.

The protein belongs to the NAGSA dehydrogenase family. Type 2 subfamily.

It is found in the cytoplasm. The catalysed reaction is N-acetyl-L-glutamate 5-semialdehyde + phosphate + NADP(+) = N-acetyl-L-glutamyl 5-phosphate + NADPH + H(+). Its pathway is amino-acid biosynthesis; L-arginine biosynthesis; N(2)-acetyl-L-ornithine from L-glutamate: step 3/4. In terms of biological role, catalyzes the NADPH-dependent reduction of N-acetyl-5-glutamyl phosphate to yield N-acetyl-L-glutamate 5-semialdehyde. This Brucella suis (strain ATCC 23445 / NCTC 10510) protein is N-acetyl-gamma-glutamyl-phosphate reductase.